Consider the following 269-residue polypeptide: Thymidylate synthase (269 aa).

Arg21 contacts dUMP. His51 contributes to the (6R)-5,10-methylene-5,6,7,8-tetrahydrofolate binding site. 126–127 contributes to the dUMP binding site; that stretch reads RR. Cys146 acts as the Nucleophile in catalysis. DUMP-binding positions include 171 to 174, Asn182, and 212 to 214; these read RSGD and HLY. Asp174 contributes to the (6R)-5,10-methylene-5,6,7,8-tetrahydrofolate binding site. Ala268 serves as a coordination point for (6R)-5,10-methylene-5,6,7,8-tetrahydrofolate.

The protein belongs to the thymidylate synthase family. Bacterial-type ThyA subfamily. As to quaternary structure, homodimer.

Its subcellular location is the cytoplasm. The catalysed reaction is dUMP + (6R)-5,10-methylene-5,6,7,8-tetrahydrofolate = 7,8-dihydrofolate + dTMP. The protein operates within pyrimidine metabolism; dTTP biosynthesis. In terms of biological role, catalyzes the reductive methylation of 2'-deoxyuridine-5'-monophosphate (dUMP) to 2'-deoxythymidine-5'-monophosphate (dTMP) while utilizing 5,10-methylenetetrahydrofolate (mTHF) as the methyl donor and reductant in the reaction, yielding dihydrofolate (DHF) as a by-product. This enzymatic reaction provides an intracellular de novo source of dTMP, an essential precursor for DNA biosynthesis. The sequence is that of Thymidylate synthase from Methylocella silvestris (strain DSM 15510 / CIP 108128 / LMG 27833 / NCIMB 13906 / BL2).